The primary structure comprises 411 residues: Thyroid hormone receptor beta (411 aa).

Residues 1-24 form a disordered region; it reads MTPNSMTENGLPAWDKPKPCPDGE. Residues 1–104 form a modulating region; it reads MTPNSMTENG…IPSYLDKDEL (104 aa). Positions 15-24 are enriched in basic and acidic residues; it reads DKPKPCPDGE. Zn(2+) contacts are provided by Cys105, Cys108, Cys122, Cys125, Cys143, Cys149, Cys159, and Cys162. 2 consecutive NR C4-type zinc fingers follow at residues 105–125 and 143–167; these read CVVC…CEGC and CKYE…FKKC. The segment at residues 105 to 179 is a DNA-binding region (nuclear receptor); it reads CVVCGDKATG…VGMATDLVLD (75 aa). The NR LBD domain maps to 215–411; the sequence is QEWELIKTVT…EHYINYRRNS (197 aa). The segment at 242–411 is interaction with NR2F6; it reads KFLPEDIGQA…EHYINYRRNS (170 aa). 3,3',5-triiodo-L-thyronine-binding residues include Arg280 and Asn329. Residues Arg280 and Asn329 each coordinate L-thyroxine.

The protein belongs to the nuclear hormone receptor family. NR1 subfamily. As to quaternary structure, binds DNA as a dimer; homodimer and heterodimer with RXRA. Interacts with the coactivators NCOA1/SRC1, NCOA2/GRIP1, NCOA7 and MED1/TRAP220 in a ligand-inducible manner. Interacts with the corepressor NCOR1 in absence of ligand. Interacts with C1D. Interacts with NR2F6; the interaction impairs the binding of the THRB homodimer and THRB:RXRB heterodimer to T3 response elements. Interacts with PRMT2 and THRSP. Interacts with TACC1; this interaction is decreased in the presence of thyroid hormone T3.

The protein resides in the nucleus. In terms of biological role, nuclear hormone receptor that can act as a repressor or activator of transcription. High affinity receptor for thyroid hormones, including triiodothyronine and thyroxine. The sequence is that of Thyroid hormone receptor beta (THRB) from Ovis aries (Sheep).